The primary structure comprises 388 residues: ATP phosphoribosyltransferase regulatory subunit (388 aa).

Belongs to the class-II aminoacyl-tRNA synthetase family. HisZ subfamily. In terms of assembly, heteromultimer composed of HisG and HisZ subunits.

Its subcellular location is the cytoplasm. The protein operates within amino-acid biosynthesis; L-histidine biosynthesis; L-histidine from 5-phospho-alpha-D-ribose 1-diphosphate: step 1/9. In terms of biological role, required for the first step of histidine biosynthesis. May allow the feedback regulation of ATP phosphoribosyltransferase activity by histidine. This Acinetobacter baylyi (strain ATCC 33305 / BD413 / ADP1) protein is ATP phosphoribosyltransferase regulatory subunit.